Consider the following 135-residue polypeptide: MARPDMGGPKTGGFGGPRSGGFGGGGGGGGGFGGGGFGGGRGGDRGDRGDRDDRGGDEGGGRRGFGRRKVCRFCADKALKVDYKDQGQMKYFLTERGKIIPRRISGNCAKHQREVATAIKRGRMLAILPYTVGQM.

Residues M1–F65 are disordered. Residues P9 to R41 are compositionally biased toward gly residues. Residues G42–G61 show a composition bias toward basic and acidic residues.

This sequence belongs to the bacterial ribosomal protein bS18 family. In terms of assembly, part of the 30S ribosomal subunit. Forms a tight heterodimer with protein bS6.

Functionally, binds as a heterodimer with protein bS6 to the central domain of the 16S rRNA, where it helps stabilize the platform of the 30S subunit. The polypeptide is Small ribosomal subunit protein bS18 (Anaeromyxobacter sp. (strain K)).